Consider the following 57-residue polypeptide: Large ribosomal subunit protein eL20 (57 aa).

The span at 1-10 (MSEFTVTGTF) shows a compositional bias: polar residues. A disordered region spans residues 1–21 (MSEFTVTGTFESRDGNQPFEK).

Belongs to the eukaryotic ribosomal protein eL20 family. In terms of assembly, part of the 50S ribosomal subunit. Binds 23S rRNA.

The polypeptide is Large ribosomal subunit protein eL20 (Halomicrobium mukohataei (strain ATCC 700874 / DSM 12286 / JCM 9738 / NCIMB 13541) (Haloarcula mukohataei)).